We begin with the raw amino-acid sequence, 291 residues long: N-acetylmannosamine kinase (291 aa).

ATP-binding positions include Ala5 to Lys12 and Gly132 to Ser139. Zn(2+) contacts are provided by His156, Cys166, Cys168, and Cys173.

Belongs to the ROK (NagC/XylR) family. NanK subfamily. In terms of assembly, homodimer.

The enzyme catalyses an N-acyl-D-mannosamine + ATP = an N-acyl-D-mannosamine 6-phosphate + ADP + H(+). It participates in amino-sugar metabolism; N-acetylneuraminate degradation; D-fructose 6-phosphate from N-acetylneuraminate: step 2/5. In terms of biological role, catalyzes the phosphorylation of N-acetylmannosamine (ManNAc) to ManNAc-6-P. In Escherichia coli O6:H1 (strain CFT073 / ATCC 700928 / UPEC), this protein is N-acetylmannosamine kinase (nanK1).